A 62-amino-acid polypeptide reads, in one-letter code: Large ribosomal subunit protein bL28 (62 aa).

The protein belongs to the bacterial ribosomal protein bL28 family.

This chain is Large ribosomal subunit protein bL28, found in Thermoanaerobacter sp. (strain X514).